The chain runs to 90 residues: MAKGQSLQDPFLNALRRERVPVSIYLVNGIKLQGQVESFDQFVILLKNTVSQMVYKHAISTVVPARPFNVAGHQNAQGGYGAQDDMPSGE.

The Sm domain occupies Asp9–Phe68.

It belongs to the Hfq family. In terms of assembly, homohexamer.

In terms of biological role, RNA chaperone that binds small regulatory RNA (sRNAs) and mRNAs to facilitate mRNA translational regulation in response to envelope stress, environmental stress and changes in metabolite concentrations. Also binds with high specificity to tRNAs. In Shewanella oneidensis (strain ATCC 700550 / JCM 31522 / CIP 106686 / LMG 19005 / NCIMB 14063 / MR-1), this protein is RNA-binding protein Hfq.